Reading from the N-terminus, the 1476-residue chain is Coiled-coil domain-containing protein 88B (1476 aa).

Residues 253–481 adopt a coiled-coil conformation; sequence SHHLALQLAN…RGLLQVLQGQ (229 aa). Disordered stretches follow at residues 427-451, 509-706, 825-866, and 1323-1476; these read QRSL…SLQD, VAFD…EGAL, RRQW…ERRE, and LMRP…SLSQ. Phosphoserine is present on S436. Residues 572-586 show a composition bias toward polar residues; that stretch reads SDWSPQESGSPVETQ. Phosphoserine is present on S596. Basic and acidic residues-rich tracts occupy residues 678–690, 825–834, and 842–866; these read EARE…EGTV, RRQWEREGSR, and AEER…ERRE. A coiled-coil region spans residues 720-1303; it reads LASGVAEQEA…KIMDQYRVLE (584 aa). S1348 and S1379 each carry phosphoserine. A compositionally biased stretch (basic and acidic residues) spans 1448 to 1469; the sequence is LQEHETDANREGPEVQEPEKRP.

This sequence belongs to the CCDC88 family. In terms of assembly, homodimer. Interacts with DOCK8. Interacts (via C-terminus) with intact microtubules. Interacts with dynein-dynactin motor complex. Interacts (via C-terminus) with HSPA5. Expressed in endothelium (at protein level). Expressed in NK cells (at protein level).

The protein resides in the membrane. Its subcellular location is the cytoplasm. It localises to the cytoskeleton. It is found in the microtubule organizing center. The protein localises to the endoplasmic reticulum. The protein resides in the golgi apparatus. Its function is as follows. Acts as a positive regulator of T-cell maturation and inflammatory function. Required for several functions of T-cells, in both the CD4(+) and the CD8(+) compartments and this includes expression of cell surface markers of activation, proliferation, and cytokine production in response to specific or non-specific stimulation. Enhances NK cell cytotoxicity by positively regulating polarization of microtubule-organizing center (MTOC) to cytotoxic synapse, lytic granule transport along microtubules, and dynein-mediated clustering to MTOC. Interacts with HSPA5 and stabilizes the interaction between HSPA5 and ERN1, leading to suppression of ERN1-induced JNK activation and endoplasmic reticulum stress-induced apoptosis. The sequence is that of Coiled-coil domain-containing protein 88B (CCDC88B) from Homo sapiens (Human).